Consider the following 757-residue polypeptide: Polyribonucleotide nucleotidyltransferase (757 aa).

Positions 487 and 493 each coordinate Mg(2+). The region spanning 554-613 is the KH domain; that stretch reads PRITTVRVKPDQIRLIIGPGGKTIKGIVDQTGVAIDVEDDGTVNVASADSDAVKRALDII. One can recognise an S1 motif domain in the interval 623 to 691; that stretch reads GATYKGTVKR…REGKIRLSRR (69 aa). The tract at residues 697–757 is disordered; it reads PEGEEGDRAR…PPRERRERRS (61 aa). 2 stretches are compositionally biased toward basic and acidic residues: residues 702–711 and 719–757; these read GDRARERMAQ and PRRD…ERRS.

Belongs to the polyribonucleotide nucleotidyltransferase family. It depends on Mg(2+) as a cofactor.

The protein localises to the cytoplasm. It carries out the reaction RNA(n+1) + phosphate = RNA(n) + a ribonucleoside 5'-diphosphate. Involved in mRNA degradation. Catalyzes the phosphorolysis of single-stranded polyribonucleotides processively in the 3'- to 5'-direction. This Sorangium cellulosum (strain So ce56) (Polyangium cellulosum (strain So ce56)) protein is Polyribonucleotide nucleotidyltransferase.